We begin with the raw amino-acid sequence, 350 residues long: MSASSTAGQAGLSYRDAGVDIDAGDALVDRIKPFAKRTMREGVMAGIGGFGALFELSKKYQEPVLVSGTDGVGTKLKLAFQLNRHDTVGQDLVAMSVNDILVQGAEPLFFLDYFACGKLDVDTAATVIQGIARGCELAGCALIGGETAEMPTMYPDGEYDLAGFAVGAVEKKKIIDGTTITPGDVVLGLASSGAHSNGYSLVRKIIEVAKPDLDADFHGQRLQDAIMAPTRIYVKPLLSLIETLPVKGMAHITGGGLTENVPRVLPQNTTAVLQRDAWALPPLFQWLQSQGRVADDEMHRVFNCGIGMVVIVAKEDAERAIRHLQAAGEAVWEIGEIRERAEGQAQTVVV.

The protein belongs to the AIR synthase family.

It localises to the cytoplasm. The enzyme catalyses 2-formamido-N(1)-(5-O-phospho-beta-D-ribosyl)acetamidine + ATP = 5-amino-1-(5-phospho-beta-D-ribosyl)imidazole + ADP + phosphate + H(+). The protein operates within purine metabolism; IMP biosynthesis via de novo pathway; 5-amino-1-(5-phospho-D-ribosyl)imidazole from N(2)-formyl-N(1)-(5-phospho-D-ribosyl)glycinamide: step 2/2. In Cupriavidus pinatubonensis (strain JMP 134 / LMG 1197) (Cupriavidus necator (strain JMP 134)), this protein is Phosphoribosylformylglycinamidine cyclo-ligase.